Reading from the N-terminus, the 271-residue chain is Putative phosphoenolpyruvate synthase regulatory protein (271 aa).

151–158 (GVSRSGKT) contacts ADP.

This sequence belongs to the pyruvate, phosphate/water dikinase regulatory protein family. PSRP subfamily.

It carries out the reaction [pyruvate, water dikinase] + ADP = [pyruvate, water dikinase]-phosphate + AMP + H(+). It catalyses the reaction [pyruvate, water dikinase]-phosphate + phosphate + H(+) = [pyruvate, water dikinase] + diphosphate. Its function is as follows. Bifunctional serine/threonine kinase and phosphorylase involved in the regulation of the phosphoenolpyruvate synthase (PEPS) by catalyzing its phosphorylation/dephosphorylation. In Burkholderia lata (strain ATCC 17760 / DSM 23089 / LMG 22485 / NCIMB 9086 / R18194 / 383), this protein is Putative phosphoenolpyruvate synthase regulatory protein.